The chain runs to 190 residues: Glutathione peroxidase 2 (190 aa).

Residue Sec-40 is part of the active site. Residue Sec-40 is a non-standard amino acid, selenocysteine.

The protein belongs to the glutathione peroxidase family. As to quaternary structure, homotetramer.

It is found in the cytoplasm. The protein resides in the cytosol. The enzyme catalyses 2 glutathione + H2O2 = glutathione disulfide + 2 H2O. It carries out the reaction a hydroperoxy polyunsaturated fatty acid + 2 glutathione = a hydroxy polyunsaturated fatty acid + glutathione disulfide + H2O. The catalysed reaction is tert-butyl hydroperoxide + 2 glutathione = tert-butanol + glutathione disulfide + H2O. It catalyses the reaction cumene hydroperoxide + 2 glutathione = 2-phenylpropan-2-ol + glutathione disulfide + H2O. The enzyme catalyses (13S)-hydroperoxy-(9Z,11E)-octadecadienoate + 2 glutathione = (13S)-hydroxy-(9Z,11E)-octadecadienoate + glutathione disulfide + H2O. It carries out the reaction (5S)-hydroperoxy-(6E,8Z,11Z,14Z)-eicosatetraenoate + 2 glutathione = (5S)-hydroxy-(6E,8Z,11Z,14Z)-eicosatetraenoate + glutathione disulfide + H2O. The catalysed reaction is (12R)-hydroperoxy-(5Z,8Z,10E,14Z)-eicosatetraenoate + 2 glutathione = (12R)-hydroxy-(5Z,8Z,10E,14Z)-eicosatetraenoate + glutathione disulfide + H2O. It catalyses the reaction (15S)-hydroperoxy-(5Z,8Z,11Z,13E)-eicosatetraenoate + 2 glutathione = (15S)-hydroxy-(5Z,8Z,11Z,13E)-eicosatetraenoate + glutathione disulfide + H2O. Catalyzes the reduction of hydroperoxides in a glutathione-dependent manner thus regulating cellular redox homeostasis. Can reduce small soluble hydroperoxides such as H2O2, cumene hydroperoxide and tert-butyl hydroperoxide, as well as several fatty acid-derived hydroperoxides. Cannot reduce phosphatidycholine hydroperoxide. The chain is Glutathione peroxidase 2 (Gpx2) from Mus musculus (Mouse).